The following is an 83-amino-acid chain: Mu-theraphotoxin-Hhn2e (83 aa).

An N-terminal signal peptide occupies residues 1-21; it reads MKASMFLALAGLVLLFVVGYA. Positions 22 to 48 are excised as a propeptide; sequence SESEEKEFPRELLSKIFAVDDFKGEER. 3 disulfides stabilise this stretch: Cys-50–Cys-65, Cys-57–Cys-70, and Cys-64–Cys-77. Leucine amide is present on Leu-81.

This sequence belongs to the neurotoxin 10 (Hwtx-1) family. 15 (Hntx-3) subfamily. In terms of assembly, monomer. As to expression, expressed by the venom gland.

The protein localises to the secreted. Lethal neurotoxin. Selectively blocks tetrodotoxin-sensitive voltage-gated sodium channels (Nav). Does not affect tetrodotoxin-resistant voltage-gated sodium channels or calcium channels. In Cyriopagopus hainanus (Chinese bird spider), this protein is Mu-theraphotoxin-Hhn2e.